We begin with the raw amino-acid sequence, 271 residues long: Bifunctional protein FolD (271 aa).

NADP(+) contacts are provided by residues 154–156 (GRS), serine 181, and isoleucine 222.

Belongs to the tetrahydrofolate dehydrogenase/cyclohydrolase family. As to quaternary structure, homodimer.

It carries out the reaction (6R)-5,10-methylene-5,6,7,8-tetrahydrofolate + NADP(+) = (6R)-5,10-methenyltetrahydrofolate + NADPH. The enzyme catalyses (6R)-5,10-methenyltetrahydrofolate + H2O = (6R)-10-formyltetrahydrofolate + H(+). Its pathway is one-carbon metabolism; tetrahydrofolate interconversion. In terms of biological role, catalyzes the oxidation of 5,10-methylenetetrahydrofolate to 5,10-methenyltetrahydrofolate and then the hydrolysis of 5,10-methenyltetrahydrofolate to 10-formyltetrahydrofolate. The chain is Bifunctional protein FolD from Thermotoga maritima (strain ATCC 43589 / DSM 3109 / JCM 10099 / NBRC 100826 / MSB8).